Reading from the N-terminus, the 113-residue chain is Ribosome-associated factor Y (113 aa).

K66 is subject to N6-acetyllysine. The tract at residues K91–E113 is disordered.

This sequence belongs to the HPF/YfiA ribosome-associated protein family. YfiA subfamily. In terms of assembly, associates mainly with 70S ribosomes.

In terms of biological role, during stationary phase, prevents 70S dimer formation, probably in order to regulate translation efficiency during transition between the exponential and the stationary phases. In addition, during environmental stress such as cold shock or excessive cell density at stationary phase, stabilizes the 70S ribosome against dissociation, inhibits translation initiation and increase translation accuracy. When normal growth conditions are restored, is quickly released from the ribosome. The protein is Ribosome-associated factor Y of Escherichia coli O157:H7.